A 476-amino-acid polypeptide reads, in one-letter code: Membrane-bound lytic murein transglycosylase F (476 aa).

An N-terminal signal peptide occupies residues 1 to 16 (MIKTLFIILLCGILSA). Residues 17–259 (CQPVDIQDVD…HLNEKYFGHV (243 aa)) form a non-LT domain region. Positions 260–476 (KRFDYVDTRA…VPAKSHVSAQ (217 aa)) are LT domain. Glu-304 is a catalytic residue.

In the N-terminal section; belongs to the bacterial solute-binding protein 3 family. It in the C-terminal section; belongs to the transglycosylase Slt family.

It localises to the cell outer membrane. It catalyses the reaction Exolytic cleavage of the (1-&gt;4)-beta-glycosidic linkage between N-acetylmuramic acid (MurNAc) and N-acetylglucosamine (GlcNAc) residues in peptidoglycan, from either the reducing or the non-reducing ends of the peptidoglycan chains, with concomitant formation of a 1,6-anhydrobond in the MurNAc residue.. In terms of biological role, murein-degrading enzyme that degrades murein glycan strands and insoluble, high-molecular weight murein sacculi, with the concomitant formation of a 1,6-anhydromuramoyl product. Lytic transglycosylases (LTs) play an integral role in the metabolism of the peptidoglycan (PG) sacculus. Their lytic action creates space within the PG sacculus to allow for its expansion as well as for the insertion of various structures such as secretion systems and flagella. The chain is Membrane-bound lytic murein transglycosylase F from Shewanella frigidimarina (strain NCIMB 400).